A 163-amino-acid chain; its full sequence is Nucleotide-binding protein YajQ (163 aa).

The protein belongs to the YajQ family.

Nucleotide-binding protein. The protein is Nucleotide-binding protein YajQ of Escherichia coli (strain K12 / DH10B).